The following is a 352-amino-acid chain: Holliday junction branch migration complex subunit RuvB (352 aa).

Residues 1–181 (MTDRIVGAAK…FGIPVRLHFY (181 aa)) form a large ATPase domain (RuvB-L) region. ATP-binding positions include L20, R21, G62, K65, T66, T67, 128-130 (EDF), R171, Y181, and R218. Position 66 (T66) interacts with Mg(2+). Residues 182–252 (EVAELEGIVR…AADKALQRLE (71 aa)) form a small ATPAse domain (RuvB-S) region. The segment at 255–352 (ELGLDALDHR…FDGDEENGSA (98 aa)) is head domain (RuvB-H). Positions 291, 310, and 315 each coordinate DNA.

It belongs to the RuvB family. As to quaternary structure, homohexamer. Forms an RuvA(8)-RuvB(12)-Holliday junction (HJ) complex. HJ DNA is sandwiched between 2 RuvA tetramers; dsDNA enters through RuvA and exits via RuvB. An RuvB hexamer assembles on each DNA strand where it exits the tetramer. Each RuvB hexamer is contacted by two RuvA subunits (via domain III) on 2 adjacent RuvB subunits; this complex drives branch migration. In the full resolvosome a probable DNA-RuvA(4)-RuvB(12)-RuvC(2) complex forms which resolves the HJ.

The protein localises to the cytoplasm. It carries out the reaction ATP + H2O = ADP + phosphate + H(+). Its function is as follows. The RuvA-RuvB-RuvC complex processes Holliday junction (HJ) DNA during genetic recombination and DNA repair, while the RuvA-RuvB complex plays an important role in the rescue of blocked DNA replication forks via replication fork reversal (RFR). RuvA specifically binds to HJ cruciform DNA, conferring on it an open structure. The RuvB hexamer acts as an ATP-dependent pump, pulling dsDNA into and through the RuvAB complex. RuvB forms 2 homohexamers on either side of HJ DNA bound by 1 or 2 RuvA tetramers; 4 subunits per hexamer contact DNA at a time. Coordinated motions by a converter formed by DNA-disengaged RuvB subunits stimulates ATP hydrolysis and nucleotide exchange. Immobilization of the converter enables RuvB to convert the ATP-contained energy into a lever motion, pulling 2 nucleotides of DNA out of the RuvA tetramer per ATP hydrolyzed, thus driving DNA branch migration. The RuvB motors rotate together with the DNA substrate, which together with the progressing nucleotide cycle form the mechanistic basis for DNA recombination by continuous HJ branch migration. Branch migration allows RuvC to scan DNA until it finds its consensus sequence, where it cleaves and resolves cruciform DNA. The protein is Holliday junction branch migration complex subunit RuvB of Parvibaculum lavamentivorans (strain DS-1 / DSM 13023 / NCIMB 13966).